Reading from the N-terminus, the 486-residue chain is Zinc metalloproteinase-disintegrin VMP-II (486 aa).

The N-terminal stretch at 1-20 is a signal peptide; sequence MIQVLLVTICLAVFPYQGSS. The propeptide occupies 21–190; it reads IILESGNVND…KASQSNLPPE (170 aa). Glutamine 191 is subject to Pyrrolidone carboxylic acid. One can recognise a Peptidase M12B domain in the interval 197 to 394; it reads RYIELVVVAD…HYTTCLYNEP (198 aa). 2 residues coordinate Ca(2+): glutamate 200 and aspartate 284. Cystine bridges form between cysteine 308–cysteine 389, cysteine 348–cysteine 372, and cysteine 350–cysteine 355. Histidine 333 contributes to the Zn(2+) binding site. Residue glutamate 334 is part of the active site. Zn(2+) contacts are provided by histidine 337 and histidine 343. Residues cysteine 389 and asparagine 392 each contribute to the Ca(2+) site. Residues 402 to 486 form the Disintegrin domain; it reads PPVCGNYYTE…AECPNKGYYG (85 aa). 7 cysteine pairs are disulfide-bonded: cysteine 405/cysteine 424, cysteine 416/cysteine 434, cysteine 418/cysteine 429, cysteine 428/cysteine 451, cysteine 442/cysteine 448, cysteine 447/cysteine 472, and cysteine 460/cysteine 479. The Cell attachment site signature appears at 464 to 466; the sequence is RGD.

The protein belongs to the venom metalloproteinase (M12B) family. P-II subfamily. P-IIb sub-subfamily. Monomer. It depends on Zn(2+) as a cofactor. In terms of tissue distribution, expressed by the venom gland.

It is found in the secreted. Functionally, snake venom zinc metalloproteinase that inhibits ADP-induced platelet aggregation (probably by binding integrin alpha-IIb/beta-3 (ITGA2B/ITGB3)) and degrades fibrinogen. This chain is Zinc metalloproteinase-disintegrin VMP-II, found in Crotalus atrox (Western diamondback rattlesnake).